The primary structure comprises 539 residues: Serine/threonine-protein kinase 35 (539 aa).

A disordered region spans residues 103–161 (ITIQGPAPPHLGARRRDEARGARAAPLLLPPPPAAMETGKENGARRGTKSPERKRRSPV). Over residues 148–160 (RGTKSPERKRRSP) the composition is skewed to basic residues. Residues 207 to 535 (YSLLAEIGRG…FELETRMDQV (329 aa)) form the Protein kinase domain. Residues 213 to 221 (IGRGSYGVV) and Lys236 each bind ATP. The active-site Proton acceptor is Asp365.

Belongs to the protein kinase superfamily. Ser/Thr protein kinase family. Interacts with PDLIM1/CLP-36. Post-translationally, autophosphorylated.

It localises to the nucleus. Its subcellular location is the nucleolus. The protein localises to the cytoplasm. It catalyses the reaction L-seryl-[protein] + ATP = O-phospho-L-seryl-[protein] + ADP + H(+). It carries out the reaction L-threonyl-[protein] + ATP = O-phospho-L-threonyl-[protein] + ADP + H(+). The polypeptide is Serine/threonine-protein kinase 35 (Stk35) (Mus musculus (Mouse)).